A 261-amino-acid polypeptide reads, in one-letter code: Syntaxin-7 (261 aa).

The residue at position 2 (serine 2) is an N-acetylserine. At 2–238 (SYTPGIGGDS…DYQRKSRKTL (237 aa)) the chain is on the cytoplasmic side. Threonine 4 is modified (phosphothreonine). Serine 45 carries the post-translational modification Phosphoserine. Positions 47–68 (ELRQLLQQKQQYTNQLAKETDK) form a coiled coil. At serine 75 the chain carries Phosphoserine. At threonine 79 the chain carries Phosphothreonine. Residues serine 125, serine 126, serine 129, and serine 205 each carry the phosphoserine modification. Residues 128 to 148 (VSGGFPEDSSKEKNLVSWESQ) form a disordered region. The 63-residue stretch at 165-227 (LRLIHERESS…QQANQQLSRA (63 aa)) folds into the t-SNARE coiled-coil homology domain. A helical; Anchor for type IV membrane protein membrane pass occupies residues 239-259 (CIIIFILVVRIVIICLIVWGL). Topologically, residues 260–261 (KG) are vesicular.

It belongs to the syntaxin family. In terms of assembly, interacts with VPS11, VPS16 and VPS18. Interacts with VPS33A. Forms a SNARE complex with VTI1B, STX8 and VAMP8 which functions in the homotypic fusion of late endosomes. Component of the SNARE complex composed of STX7, STX8, VAMP7 and VTI1B that is required for heterotypic fusion of late endosomes with lysosomes. Interacts with TPC1.

The protein localises to the early endosome membrane. In terms of biological role, may be involved in protein trafficking from the plasma membrane to the early endosome (EE) as well as in homotypic fusion of endocytic organelles. Mediates the endocytic trafficking from early endosomes to late endosomes and lysosomes. The sequence is that of Syntaxin-7 (Stx7) from Mus musculus (Mouse).